The sequence spans 301 residues: MGHYFINLFTYTIIAFIFSAVLCKFLMKKMINYKFGYDLHKKEKIKVPEMGGLAVLFSNALFIPFVNPIFVLPIITAGIIGIVDDIAKLSPKEKLILLFISGLIIGILFYNNSYVNLIEILIIALGIMISSNLTNMLAGFNGLEIGMGVIASISLALVLFLDNYTTGFLSALIFSASYLGLLIFNKYPAKVFPGDVGTLPIGAFLAVLAVVYKEYIPFLVIMMPYVIDASLKYLSAGVMSRDEHKPTTLKEDGKLYYIGGYLSLPRLILKYKPMREPHLVTVLWIIGIFFGIVGILISLIA.

8 consecutive transmembrane segments (helical) span residues 2 to 22 (GHYF…SAVL), 62 to 82 (FIPF…IIGI), 95 to 115 (LILL…NSYV), 117 to 137 (LIEI…TNML), 140 to 160 (FNGL…LVLF), 164 to 184 (YTTG…LLIF), 191 to 211 (VFPG…LAVV), and 280 to 300 (VTVL…ISLI).

It belongs to the glycosyltransferase 4 family.

The protein localises to the cell membrane. The sequence is that of Putative glycosyltransferase MJ1113 from Methanocaldococcus jannaschii (strain ATCC 43067 / DSM 2661 / JAL-1 / JCM 10045 / NBRC 100440) (Methanococcus jannaschii).